We begin with the raw amino-acid sequence, 263 residues long: Small ribosomal subunit protein eS1 (263 aa).

Residues 235 to 263 are disordered; it reads HGEGGGGKGEAGDKSERPEGYEPPVQESV. Positions 244–254 are enriched in basic and acidic residues; it reads EAGDKSERPEG.

The protein belongs to the eukaryotic ribosomal protein eS1 family. As to quaternary structure, component of the small ribosomal subunit. Mature ribosomes consist of a small (40S) and a large (60S) subunit. The 40S subunit contains about 33 different proteins and 1 molecule of RNA (18S). The 60S subunit contains about 49 different proteins and 3 molecules of RNA (28S, 5.8S and 5S).

It localises to the cytoplasm. This is Small ribosomal subunit protein eS1 from Bombyx mori (Silk moth).